A 93-amino-acid polypeptide reads, in one-letter code: Large ribosomal subunit protein uL23cz/uL23cy (93 aa).

The protein belongs to the universal ribosomal protein uL23 family. Part of the 50S ribosomal subunit.

Its subcellular location is the plastid. The protein localises to the chloroplast. Its function is as follows. Binds to 23S rRNA. This is Large ribosomal subunit protein uL23cz/uL23cy (rpl23-A) from Lotus japonicus (Lotus corniculatus var. japonicus).